The following is a 71-amino-acid chain: Small ribosomal subunit protein bS21 (71 aa).

The segment covering 48-60 (KKAAAVKRYKKKL) has biased composition (basic residues). Residues 48–71 (KKAAAVKRYKKKLQRESIRTTRMY) are disordered. Positions 61–71 (QRESIRTTRMY) are enriched in basic and acidic residues.

Belongs to the bacterial ribosomal protein bS21 family.

This chain is Small ribosomal subunit protein bS21, found in Psychrobacter sp. (strain PRwf-1).